The chain runs to 434 residues: Glutamyl-tRNA reductase (434 aa).

Substrate-binding positions include 57–60, Ser-116, 121–123, and Gln-127; these read TCNR and ETQ. Residue Cys-58 is the Nucleophile of the active site. 196–201 is a binding site for NADP(+); sequence GAGEMI.

This sequence belongs to the glutamyl-tRNA reductase family. In terms of assembly, homodimer.

The catalysed reaction is (S)-4-amino-5-oxopentanoate + tRNA(Glu) + NADP(+) = L-glutamyl-tRNA(Glu) + NADPH + H(+). It participates in porphyrin-containing compound metabolism; protoporphyrin-IX biosynthesis; 5-aminolevulinate from L-glutamyl-tRNA(Glu): step 1/2. Functionally, catalyzes the NADPH-dependent reduction of glutamyl-tRNA(Glu) to glutamate 1-semialdehyde (GSA). The sequence is that of Glutamyl-tRNA reductase from Burkholderia pseudomallei (strain 1106a).